Reading from the N-terminus, the 445-residue chain is Pre-B-cell leukemia transcription factor 2 (445 aa).

The segment at 13–44 (VGIPGLPIHGGPQTLTPHPMHEPPTDNGEPRK) is disordered. Residues 31-44 (PMHEPPTDNGEPRK) show a composition bias toward basic and acidic residues. Residues 42–236 (PRKQDIGDIL…VMILRSRFLD (195 aa)) enclose the PBC domain. Residues 49 to 128 (DILQQIMTIT…EGVAGPEKGG (80 aa)) are PBC-A. A PBC-B region spans residues 131–236 (AAAAAAAAAS…VMILRSRFLD (106 aa)). Positions 237-299 (ARRKRRNFSK…NKRIRYKKNI (63 aa)) form a DNA-binding region, homeobox; TALE-type. Residues 319-332 (QGGHSGANSPTTPT) are compositionally biased toward polar residues. The disordered stretch occupies residues 319–338 (QGGHSGANSPTTPTSAGSGG).

This sequence belongs to the TALE/PBX homeobox family.

It is found in the nucleus. Functionally, transcriptional activator that binds the sequence 5'-ATCAATCAA-3'. The polypeptide is Pre-B-cell leukemia transcription factor 2 (pbx2) (Xenopus laevis (African clawed frog)).